The following is a 716-amino-acid chain: Amino-acid acetyltransferase, mitochondrial (716 aa).

A mitochondrion-targeting transit peptide spans 1-44 (MSLHTGWPRTVNSSFLKKHRSSLCTCQHTSSVLPRSFSTTPDRH). Residues 37-56 (FSTTPDRHVQQSADFSSTSR) show a composition bias toward polar residues. 2 disordered regions span residues 37 to 58 (FSTT…SRSY) and 96 to 121 (KAQH…TLPS). Residues 101 to 112 (KSPDANKPEPEK) are compositionally biased toward basic and acidic residues. Residues 537-706 (SRPRLKLDDP…YEAVCRSIQP (170 aa)) form the N-acetyltransferase domain.

This sequence belongs to the acetyltransferase family.

The protein resides in the mitochondrion. It carries out the reaction L-glutamate + acetyl-CoA = N-acetyl-L-glutamate + CoA + H(+). The protein operates within amino-acid biosynthesis; L-arginine biosynthesis; N(2)-acetyl-L-ornithine from L-glutamate: step 1/4. N-acetylglutamate synthase involved in arginine biosynthesis. This Aspergillus fumigatus (strain CBS 144.89 / FGSC A1163 / CEA10) (Neosartorya fumigata) protein is Amino-acid acetyltransferase, mitochondrial (arg2).